A 342-amino-acid polypeptide reads, in one-letter code: Phosphate acyltransferase (342 aa).

The protein belongs to the PlsX family. In terms of assembly, homodimer. Probably interacts with PlsY.

The protein resides in the cytoplasm. The enzyme catalyses a fatty acyl-[ACP] + phosphate = an acyl phosphate + holo-[ACP]. It participates in lipid metabolism; phospholipid metabolism. Its function is as follows. Catalyzes the reversible formation of acyl-phosphate (acyl-PO(4)) from acyl-[acyl-carrier-protein] (acyl-ACP). This enzyme utilizes acyl-ACP as fatty acyl donor, but not acyl-CoA. The polypeptide is Phosphate acyltransferase (Legionella pneumophila (strain Corby)).